The sequence spans 188 residues: GMP synthase [glutamine-hydrolyzing] subunit A (188 aa).

In terms of domain architecture, Glutamine amidotransferase type-1 spans 3–188; sequence PLYVVNNYGQ…FSICTGQNKG (186 aa). The Nucleophile role is filled by Cys-75. Catalysis depends on residues His-162 and Glu-164.

As to quaternary structure, heterodimer composed of a glutamine amidotransferase subunit (A) and a GMP-binding subunit (B).

The catalysed reaction is XMP + L-glutamine + ATP + H2O = GMP + L-glutamate + AMP + diphosphate + 2 H(+). It functions in the pathway purine metabolism; GMP biosynthesis; GMP from XMP (L-Gln route): step 1/1. Functionally, catalyzes the synthesis of GMP from XMP. The polypeptide is GMP synthase [glutamine-hydrolyzing] subunit A (Methanospirillum hungatei JF-1 (strain ATCC 27890 / DSM 864 / NBRC 100397 / JF-1)).